The following is a 119-amino-acid chain: Large ribosomal subunit protein uL18 (119 aa).

The protein belongs to the universal ribosomal protein uL18 family. Part of the 50S ribosomal subunit; part of the 5S rRNA/L5/L18/L25 subcomplex. Contacts the 5S and 23S rRNAs.

This is one of the proteins that bind and probably mediate the attachment of the 5S RNA into the large ribosomal subunit, where it forms part of the central protuberance. In Xylella fastidiosa (strain 9a5c), this protein is Large ribosomal subunit protein uL18.